The chain runs to 317 residues: 4-hydroxy-3-methylbut-2-enyl diphosphate reductase (317 aa).

Residue C12 participates in [4Fe-4S] cluster binding. (2E)-4-hydroxy-3-methylbut-2-enyl diphosphate is bound by residues H41 and H74. Residues H41 and H74 each contribute to the dimethylallyl diphosphate site. Residues H41 and H74 each contribute to the isopentenyl diphosphate site. Position 97 (C97) interacts with [4Fe-4S] cluster. H125 contributes to the (2E)-4-hydroxy-3-methylbut-2-enyl diphosphate binding site. H125 provides a ligand contact to dimethylallyl diphosphate. H125 contributes to the isopentenyl diphosphate binding site. The active-site Proton donor is E127. Residue T168 participates in (2E)-4-hydroxy-3-methylbut-2-enyl diphosphate binding. Residue C198 coordinates [4Fe-4S] cluster. Positions 226, 227, 228, and 270 each coordinate (2E)-4-hydroxy-3-methylbut-2-enyl diphosphate. S226, S227, N228, and S270 together coordinate dimethylallyl diphosphate. Positions 226, 227, 228, and 270 each coordinate isopentenyl diphosphate.

The protein belongs to the IspH family. As to quaternary structure, homodimer. [4Fe-4S] cluster is required as a cofactor.

The catalysed reaction is isopentenyl diphosphate + 2 oxidized [2Fe-2S]-[ferredoxin] + H2O = (2E)-4-hydroxy-3-methylbut-2-enyl diphosphate + 2 reduced [2Fe-2S]-[ferredoxin] + 2 H(+). The enzyme catalyses dimethylallyl diphosphate + 2 oxidized [2Fe-2S]-[ferredoxin] + H2O = (2E)-4-hydroxy-3-methylbut-2-enyl diphosphate + 2 reduced [2Fe-2S]-[ferredoxin] + 2 H(+). It participates in isoprenoid biosynthesis; dimethylallyl diphosphate biosynthesis; dimethylallyl diphosphate from (2E)-4-hydroxy-3-methylbutenyl diphosphate: step 1/1. It functions in the pathway isoprenoid biosynthesis; isopentenyl diphosphate biosynthesis via DXP pathway; isopentenyl diphosphate from 1-deoxy-D-xylulose 5-phosphate: step 6/6. Catalyzes the conversion of 1-hydroxy-2-methyl-2-(E)-butenyl 4-diphosphate (HMBPP) into a mixture of isopentenyl diphosphate (IPP) and dimethylallyl diphosphate (DMAPP). Acts in the terminal step of the DOXP/MEP pathway for isoprenoid precursor biosynthesis. This chain is 4-hydroxy-3-methylbut-2-enyl diphosphate reductase, found in Proteus mirabilis (strain HI4320).